Reading from the N-terminus, the 482-residue chain is ATP synthase subunit beta (482 aa).

Residue 161 to 168 (GGAGVGKT) participates in ATP binding.

The protein belongs to the ATPase alpha/beta chains family. As to quaternary structure, F-type ATPases have 2 components, CF(1) - the catalytic core - and CF(0) - the membrane proton channel. CF(1) has five subunits: alpha(3), beta(3), gamma(1), delta(1), epsilon(1). CF(0) has three main subunits: a(1), b(2) and c(9-12). The alpha and beta chains form an alternating ring which encloses part of the gamma chain. CF(1) is attached to CF(0) by a central stalk formed by the gamma and epsilon chains, while a peripheral stalk is formed by the delta and b chains.

It localises to the cell inner membrane. It carries out the reaction ATP + H2O + 4 H(+)(in) = ADP + phosphate + 5 H(+)(out). Produces ATP from ADP in the presence of a proton gradient across the membrane. The catalytic sites are hosted primarily by the beta subunits. This Solibacter usitatus (strain Ellin6076) protein is ATP synthase subunit beta.